A 264-amino-acid chain; its full sequence is MKPYLELLQHVLDHGAEKSDRTGTGTRSVFGWQMRFDLNDGFPLVTTKKLHLRSIIHELLWFLKGDTNIGYLSDHQVRIWDEWADDNGDLGPVYGKQWRRWTGPDGVEIDQMQWLVDEIKRNPDSRRLVISAWNVGELPQMALMPCHSLFQFYVVNGKLSCQLYQRSGDIFLGVPFNIASYALLTHMVAQATGLGVGDFVHTLGDAHLYSNHFEQAREQLTRTPRALPSLRLNPEVTDLFAFRFEDIAIEGYDPHPAIKAPVAV.

Residue Arg-21 coordinates dUMP. A (6R)-5,10-methylene-5,6,7,8-tetrahydrofolate-binding site is contributed by His-51. 126–127 (RR) provides a ligand contact to dUMP. The active-site Nucleophile is the Cys-146. Residues 166 to 169 (RSGD), Asn-177, and 207 to 209 (HLY) each bind dUMP. Asp-169 is a (6R)-5,10-methylene-5,6,7,8-tetrahydrofolate binding site. A (6R)-5,10-methylene-5,6,7,8-tetrahydrofolate-binding site is contributed by Ala-263.

Belongs to the thymidylate synthase family. Bacterial-type ThyA subfamily. Homodimer.

The protein localises to the cytoplasm. It carries out the reaction dUMP + (6R)-5,10-methylene-5,6,7,8-tetrahydrofolate = 7,8-dihydrofolate + dTMP. It participates in pyrimidine metabolism; dTTP biosynthesis. Functionally, catalyzes the reductive methylation of 2'-deoxyuridine-5'-monophosphate (dUMP) to 2'-deoxythymidine-5'-monophosphate (dTMP) while utilizing 5,10-methylenetetrahydrofolate (mTHF) as the methyl donor and reductant in the reaction, yielding dihydrofolate (DHF) as a by-product. This enzymatic reaction provides an intracellular de novo source of dTMP, an essential precursor for DNA biosynthesis. This is Thymidylate synthase from Xanthomonas axonopodis pv. citri (strain 306).